The sequence spans 509 residues: MEEFQRYIELDRSWQHNFFYPLIFQEYIYGFAYDHGLNKSILLENAGDKKYSLLIVKRLITRMYQQNHLILSDKNSNQNDFFGHKHKKNLYYQMISEGFAVIVEIPFSLLLISSLEAKEKKIVKSNNLRSIHSIFPFFEDKFLHLNYALEILIPYPIHLEILVQTLRYWVKDASSLHLLRFFLYEYRNCNSLITPPKSISIFSKSNQRLFLFLYNFHVCEYESLFVFLCNQSSHLRSISFGALLERIYFYGKLEYLVKVKTFTKYLRVILWFFKDPFLHYVRYRGKSILTSKGTSFLMHKWKYYLINFWQSRFSLWSQPRRIYINPLSKHSLDFMGFFSSVRLNSSVVRSQMVENSFLIDNPIKKFDTIVRIIPLVGSLAKAKFCNVLGHPISKSVWTDLLDSDIIDRFGRICRNLSHYYSGSSRKKSLYQIKYILRLSCARTLARKHKSTVRAFLKRLGSEFLEEFFTEEERILSLILPRDSSISRRFYRGPIWYLDIFCIHDLVNDE.

It belongs to the intron maturase 2 family. MatK subfamily.

Its subcellular location is the plastid. It localises to the chloroplast. In terms of biological role, usually encoded in the trnK tRNA gene intron. Probably assists in splicing its own and other chloroplast group II introns. In Portulaca oleracea (Common purslane), this protein is Maturase K.